Reading from the N-terminus, the 85-residue chain is Defensin-like protein 11 (85 aa).

The N-terminal stretch at 1 to 29 (MGKTISFSAIILVFLLVSTGLMKQGDAQA) is a signal peptide. Disulfide bonds link C32–C84, C44–C68, C54–C75, and C58–C77.

This sequence belongs to the DEFL family.

Its subcellular location is the secreted. In Arabidopsis thaliana (Mouse-ear cress), this protein is Defensin-like protein 11.